A 378-amino-acid chain; its full sequence is Ribosomal RNA large subunit methyltransferase G (378 aa).

This sequence belongs to the methyltransferase superfamily. RlmG family.

It localises to the cytoplasm. It carries out the reaction guanosine(1835) in 23S rRNA + S-adenosyl-L-methionine = N(2)-methylguanosine(1835) in 23S rRNA + S-adenosyl-L-homocysteine + H(+). In terms of biological role, specifically methylates the guanine in position 1835 (m2G1835) of 23S rRNA. The protein is Ribosomal RNA large subunit methyltransferase G of Escherichia coli O1:K1 / APEC.